Here is a 198-residue protein sequence, read N- to C-terminus: Small ribosomal subunit protein uS4c (198 aa).

A disordered region spans residues 17 to 40; that stretch reads TLPGLTSKRPKNRKDSMNRSSSRK. Residues 88 to 154 enclose the S4 RNA-binding domain; the sequence is MRLDKSFSIG…IKKNIDLFQR (67 aa).

The protein belongs to the universal ribosomal protein uS4 family. In terms of assembly, part of the 30S ribosomal subunit. Contacts protein S5. The interaction surface between S4 and S5 is involved in control of translational fidelity.

The protein localises to the plastid. It is found in the chloroplast. Functionally, one of the primary rRNA binding proteins, it binds directly to 16S rRNA where it nucleates assembly of the body of the 30S subunit. Its function is as follows. With S5 and S12 plays an important role in translational accuracy. The chain is Small ribosomal subunit protein uS4c (rps4) from Pinus thunbergii (Japanese black pine).